The following is a 386-amino-acid chain: Succinate--CoA ligase [ADP-forming] subunit beta (386 aa).

The ATP-grasp domain occupies 9 to 244 (KEILRKYGVP…HDEEDPLETR (236 aa)). ATP is bound by residues Lys46, 53–55 (GRG), Glu99, Cys102, and Glu107. Residues Asn199 and Asp213 each coordinate Mg(2+). Substrate-binding positions include Asn264 and 321–323 (GIM).

It belongs to the succinate/malate CoA ligase beta subunit family. In terms of assembly, heterotetramer of two alpha and two beta subunits. The cofactor is Mg(2+).

It catalyses the reaction succinate + ATP + CoA = succinyl-CoA + ADP + phosphate. The enzyme catalyses GTP + succinate + CoA = succinyl-CoA + GDP + phosphate. Its pathway is carbohydrate metabolism; tricarboxylic acid cycle; succinate from succinyl-CoA (ligase route): step 1/1. Its function is as follows. Succinyl-CoA synthetase functions in the citric acid cycle (TCA), coupling the hydrolysis of succinyl-CoA to the synthesis of either ATP or GTP and thus represents the only step of substrate-level phosphorylation in the TCA. The beta subunit provides nucleotide specificity of the enzyme and binds the substrate succinate, while the binding sites for coenzyme A and phosphate are found in the alpha subunit. This is Succinate--CoA ligase [ADP-forming] subunit beta from Rickettsia felis (strain ATCC VR-1525 / URRWXCal2) (Rickettsia azadi).